Consider the following 566-residue polypeptide: Transmembrane protein 151B (566 aa).

The span at 1 to 11 (MSPPGSAAGES) shows a compositional bias: low complexity. Positions 1–25 (MSPPGSAAGESAAGGGGGGGGPGVS) are disordered. Residues 12 to 23 (AAGGGGGGGGPG) show a composition bias toward gly residues. 2 helical membrane passes run 65–85 (CLLL…CHVT) and 112–132 (YVYI…VECW). The segment covering 495-512 (VNEASCPTEQTRLSSQAS) has biased composition (polar residues). The interval 495-529 (VNEASCPTEQTRLSSQASMGDDEDDDEEEAGPPPP) is disordered. A compositionally biased stretch (acidic residues) spans 514-524 (GDDEDDDEEEA).

It belongs to the TMEM151 family.

The protein resides in the membrane. The chain is Transmembrane protein 151B (TMEM151B) from Homo sapiens (Human).